The primary structure comprises 251 residues: Flap endonuclease Xni (251 aa).

Mg(2+) is bound at residue Asp104. One can recognise a 5'-3' exonuclease domain in the interval 160–249 (VLPRQLPDYW…IDGNLQQLRL (90 aa)). The K(+) site is built by Leu171, Ala172, Pro180, Val182, and Ile185. The interval 184-189 (GIGPKS) is interaction with DNA.

It belongs to the Xni family. The cofactor is Mg(2+). K(+) serves as cofactor.

In terms of biological role, has flap endonuclease activity. During DNA replication, flap endonucleases cleave the 5'-overhanging flap structure that is generated by displacement synthesis when DNA polymerase encounters the 5'-end of a downstream Okazaki fragment. The chain is Flap endonuclease Xni from Salmonella heidelberg (strain SL476).